We begin with the raw amino-acid sequence, 936 residues long: 2-oxoglutarate dehydrogenase E1 component (936 aa).

The protein belongs to the alpha-ketoglutarate dehydrogenase family. Homodimer. Part of the 2-oxoglutarate dehydrogenase (OGDH) complex composed of E1 (2-oxoglutarate dehydrogenase), E2 (dihydrolipoamide succinyltransferase) and E3 (dihydrolipoamide dehydrogenase); the complex contains multiple copies of the three enzymatic components (E1, E2 and E3). The cofactor is thiamine diphosphate.

The enzyme catalyses N(6)-[(R)-lipoyl]-L-lysyl-[protein] + 2-oxoglutarate + H(+) = N(6)-[(R)-S(8)-succinyldihydrolipoyl]-L-lysyl-[protein] + CO2. E1 component of the 2-oxoglutarate dehydrogenase (OGDH) complex which catalyzes the decarboxylation of 2-oxoglutarate, the first step in the conversion of 2-oxoglutarate to succinyl-CoA and CO(2). This is 2-oxoglutarate dehydrogenase E1 component (sucA) from Rickettsia prowazekii (strain Madrid E).